Consider the following 228-residue polypeptide: RNA pyrophosphohydrolase (228 aa).

Positions methionine 1–isoleucine 70 are unknown. Residues valine 71–arginine 228 form a rppH domain region. Residues glycine 76 to threonine 221 form the Nudix hydrolase domain. Residues glycine 109–glycine 130 carry the Nudix box motif.

The protein in the C-terminal section; belongs to the Nudix hydrolase family. RppH subfamily. A divalent metal cation serves as cofactor.

Functionally, accelerates the degradation of transcripts by removing pyrophosphate from the 5'-end of triphosphorylated RNA, leading to a more labile monophosphorylated state that can stimulate subsequent ribonuclease cleavage. The polypeptide is RNA pyrophosphohydrolase (Coxiella burnetii (strain RSA 493 / Nine Mile phase I)).